We begin with the raw amino-acid sequence, 78 residues long: Large ribosomal subunit protein bL28 (78 aa).

Belongs to the bacterial ribosomal protein bL28 family.

The chain is Large ribosomal subunit protein bL28 from Histophilus somni (strain 129Pt) (Haemophilus somnus).